Here is a 734-residue protein sequence, read N- to C-terminus: Sulfate transporter (734 aa).

A compositionally biased stretch (polar residues) spans 1–11; the sequence is MSLKNGEQNDL. The tract at residues 1–38 is disordered; that stretch reads MSLKNGEQNDLSPKDSVKGNDQYRSPSGIHVEHEEESR. Residues Ser12 and Ser16 each carry the phosphoserine modification. Helical transmembrane passes span 113 to 133 and 138 to 158; these read MMSG…YSLL and PIYG…LGTS. Asn194 and Asn204 each carry an N-linked (GlcNAc...) asparagine glycan. Helical transmembrane passes span 222-242, 247-267, 269-289, 292-312, 379-399, 415-435, 453-473, and 519-539; these read FVAG…VSVY, LLGG…VKYL, GLSL…IHIF, IHKT…VLLP, VDAI…SEMF, AIGF…SAAL, VMTA…FFSL, and LIST…CVIL. The STAS domain maps to 563–714; sequence AYKNLQAKSG…YSVYEAMTFA (152 aa).

It belongs to the SLC26A/SulP transporter (TC 2.A.53) family. N-glycosylated.

Its subcellular location is the cell membrane. The protein localises to the apical cell membrane. The catalysed reaction is oxalate(in) + sulfate(out) = oxalate(out) + sulfate(in). It carries out the reaction sulfate(out) + 2 chloride(in) = sulfate(in) + 2 chloride(out). The enzyme catalyses oxalate(out) + 2 chloride(in) = oxalate(in) + 2 chloride(out). It catalyses the reaction bromide(in) + chloride(out) = bromide(out) + chloride(in). The catalysed reaction is nitrate(in) + chloride(out) = nitrate(out) + chloride(in). It carries out the reaction iodide(in) + chloride(out) = iodide(out) + chloride(in). Functionally, sulfate transporter which mediates sulfate uptake into chondrocytes in order to maintain adequate sulfation of proteoglycans which is needed for cartilage development. Mediates electroneutral anion exchange of sulfate ions for oxalate ions, sulfate and oxalate ions for chloride and/or hydroxyl ions and chloride ions for bromide, iodide and nitrate ions. The coupling of sulfate transport to both hydroxyl and chloride ions likely serves to ensure transport at both acidic pH when most sulfate uptake is mediated by sulfate-hydroxide exchange and alkaline pH when most sulfate uptake is mediated by sulfate-chloride exchange. Essential for chondrocyte proliferation, differentiation and cell size expansion. The protein is Sulfate transporter (SLC26A2) of Ovis aries (Sheep).